The following is a 362-amino-acid chain: MDHIQLVNSQIDINHIHNLLIDESCGASSVFVGTTRDNFDGKKVISLEYESYEKMALKEMSKICSQLRARWPDLKHIAIYHRLGTVPVKEASVVIATSAPHRAAALESVTFAVEQLKSRVPIWKKEIYENDTIGEWKENMECPWPQYSKASLRTFDFSSCKIKQTIENIPDKLVQIRVNDSDLNKRVKCFLKRKRDEINLHNINDFKQQSSQIPCEETTTFSCARTQSFLVKQQQSSGHLKVRRANNCCGPQVRPNYSLQLNKLMTPQSDCDDLIEYKLGNSRLRNIEAYMCVSPDDDNILNRIKNIEDRILLIESTSPEYKHFVQFGTDSEKTCLKKPKKEVYLTDRINEFLTKIKREIEQ.

Residues 101 to 102 (HR), lysine 117, and 124 to 126 (KKE) each bind substrate.

This sequence belongs to the MoaE family. MOCS2B subfamily. As to quaternary structure, heterotetramer; composed of 2 small (Mocs2A) and 2 large (Mocs2B) subunits.

It localises to the cytoplasm. It catalyses the reaction 2 [molybdopterin-synthase sulfur-carrier protein]-C-terminal-Gly-aminoethanethioate + cyclic pyranopterin phosphate + H2O = molybdopterin + 2 [molybdopterin-synthase sulfur-carrier protein]-C-terminal Gly-Gly + 2 H(+). The protein operates within cofactor biosynthesis; molybdopterin biosynthesis. Its function is as follows. Catalytic subunit of the molybdopterin synthase complex, a complex that catalyzes the conversion of precursor Z into molybdopterin. Acts by mediating the incorporation of 2 sulfur atoms from thiocarboxylated Mocs2A into precursor Z to generate a dithiolene group. The chain is Molybdopterin synthase catalytic subunit from Drosophila grimshawi (Hawaiian fruit fly).